The primary structure comprises 471 residues: Putative multidrug resistance protein MdtD (471 aa).

The Periplasmic segment spans residues Met1–Gln11. Residues Leu12 to Ala32 form a helical membrane-spanning segment. Topologically, residues Leu33–His48 are cytoplasmic. The helical transmembrane segment at Met49–Ala69 threads the bilayer. Residues Asp70–Asn76 are Periplasmic-facing. A helical transmembrane segment spans residues Ile77–Thr97. The Cytoplasmic portion of the chain corresponds to Leu98–Leu101. The chain crosses the membrane as a helical span at residues Leu102–Met124. Over Lys125 to Thr137 the chain is Periplasmic. The helical transmembrane segment at Phe138–Val158 threads the bilayer. Topologically, residues Glu159 to His164 are cytoplasmic. Residues Trp165 to Met185 traverse the membrane as a helical segment. Residues Pro186 to Asp196 are Periplasmic-facing. Residues Leu197–Ser217 traverse the membrane as a helical segment. At Lys218–Pro224 the chain is on the cytoplasmic side. A helical transmembrane segment spans residues Leu225–Ala245. The Periplasmic segment spans residues Arg246–Thr262. Residues Phe263–Met283 traverse the membrane as a helical segment. At Thr284–Pro285 the chain is on the cytoplasmic side. The chain crosses the membrane as a helical span at residues Val286 to Met306. The Periplasmic portion of the chain corresponds to Val307–Thr341. The helical transmembrane segment at Leu342–Leu362 threads the bilayer. Residues Gln363–Ser395 are Cytoplasmic-facing. A helical membrane pass occupies residues Met396–Phe416. Topologically, residues Gly417 to Thr430 are periplasmic. Residues Val431–Ala451 traverse the membrane as a helical segment. At Arg452–Gln471 the chain is on the cytoplasmic side.

It belongs to the major facilitator superfamily. TCR/Tet family.

The protein localises to the cell inner membrane. This is Putative multidrug resistance protein MdtD from Escherichia coli O17:K52:H18 (strain UMN026 / ExPEC).